The sequence spans 203 residues: Glycerol-3-phosphate acyltransferase 1 (203 aa).

6 consecutive transmembrane segments (helical) span residues Leu-2–Ile-22, Gly-52–Trp-72, Val-82–Phe-102, Val-117–Leu-137, Glu-150–Trp-168, and Val-170–Tyr-190.

The protein belongs to the PlsY family. Probably interacts with PlsX.

The protein localises to the cell inner membrane. The enzyme catalyses an acyl phosphate + sn-glycerol 3-phosphate = a 1-acyl-sn-glycero-3-phosphate + phosphate. The protein operates within lipid metabolism; phospholipid metabolism. Catalyzes the transfer of an acyl group from acyl-phosphate (acyl-PO(4)) to glycerol-3-phosphate (G3P) to form lysophosphatidic acid (LPA). This enzyme utilizes acyl-phosphate as fatty acyl donor, but not acyl-CoA or acyl-ACP. This Thermotoga maritima (strain ATCC 43589 / DSM 3109 / JCM 10099 / NBRC 100826 / MSB8) protein is Glycerol-3-phosphate acyltransferase 1.